The following is a 431-amino-acid chain: Cytochrome c oxidase subunit 3 (431 aa).

The next 7 membrane-spanning stretches (helical) occupy residues 70 to 90 (IAPL…FGVI), 96 to 116 (FVIA…SIVF), 132 to 152 (LVMG…SFFW), 176 to 196 (VYSY…SGAI), 321 to 341 (LYFT…EYYF), 356 to 376 (FLLT…IGII), and 408 to 428 (LFYW…IYWW).

The protein belongs to the cytochrome c oxidase subunit 3 family. As to quaternary structure, component of the cytochrome c oxidase (complex IV, CIV), a multisubunit enzyme composed of a catalytic core of 3 subunits and several supernumerary subunits. The complex exists as a monomer or a dimer and forms supercomplexes (SCs) in the inner mitochondrial membrane with ubiquinol-cytochrome c oxidoreductase (cytochrome b-c1 complex, complex III, CIII).

It localises to the mitochondrion inner membrane. It carries out the reaction 4 Fe(II)-[cytochrome c] + O2 + 8 H(+)(in) = 4 Fe(III)-[cytochrome c] + 2 H2O + 4 H(+)(out). Component of the cytochrome c oxidase, the last enzyme in the mitochondrial electron transport chain which drives oxidative phosphorylation. The respiratory chain contains 3 multisubunit complexes succinate dehydrogenase (complex II, CII), ubiquinol-cytochrome c oxidoreductase (cytochrome b-c1 complex, complex III, CIII) and cytochrome c oxidase (complex IV, CIV), that cooperate to transfer electrons derived from NADH and succinate to molecular oxygen, creating an electrochemical gradient over the inner membrane that drives transmembrane transport and the ATP synthase. Cytochrome c oxidase is the component of the respiratory chain that catalyzes the reduction of oxygen to water. Electrons originating from reduced cytochrome c in the intermembrane space (IMS) are transferred via the dinuclear copper A center (CU(A)) of subunit 2 and heme A of subunit 1 to the active site in subunit 1, a binuclear center (BNC) formed by heme A3 and copper B (CU(B)). The BNC reduces molecular oxygen to 2 water molecules using 4 electrons from cytochrome c in the IMS and 4 protons from the mitochondrial matrix. The chain is Cytochrome c oxidase subunit 3 (cox3) from Dictyostelium citrinum (Slime mold).